A 176-amino-acid chain; its full sequence is Cathelicidin-2 (176 aa).

The N-terminal stretch at 1–29 (METQGASLSLGRWSLWLLLLGLVLPSASA) is a signal peptide. Gln-30 carries the pyrrolidone carboxylic acid modification. A propeptide spanning residues 30-130 (QALSYREAVL…DINCNELQSV (101 aa)) is cleaved from the precursor. 2 disulfide bridges follow: Cys-85/Cys-96 and Cys-107/Cys-124. The interval 135–176 (PIRRPPIRPPFRPPFRPPVRPPIRPPFRPPFRPPIGPFPGRR) is disordered. Residues 141-176 (IRPPFRPPFRPPVRPPIRPPFRPPFRPPIGPFPGRR) show a composition bias toward pro residues. Pro-173 is subject to Proline amide. Residues 174 to 176 (GRR) constitute a propeptide, removed in mature form.

It belongs to the cathelicidin family. In terms of processing, elastase is responsible for its maturation.

The protein resides in the secreted. Its function is as follows. Binds to the lipid A moiety of bacterial lipipolysaccharides (LPS), a glycolipid present in the outer membrane of all Gram-negative bacteria. Potent antimicrobial activity. The protein is Cathelicidin-2 (CATHL2) of Ovis aries (Sheep).